The sequence spans 297 residues: Light-independent protochlorophyllide reductase iron-sulfur ATP-binding protein (297 aa).

Residues 41-46 (GIGKST) and Lys70 each bind ATP. Ser45 serves as a coordination point for Mg(2+). [4Fe-4S] cluster contacts are provided by Cys126 and Cys160. Residues 211-212 (NR) and 235-237 (PDL) each bind ATP.

The protein belongs to the NifH/BchL/ChlL family. As to quaternary structure, homodimer. Protochlorophyllide reductase is composed of three subunits; BchL, BchN and BchB. [4Fe-4S] cluster serves as cofactor.

It catalyses the reaction chlorophyllide a + oxidized 2[4Fe-4S]-[ferredoxin] + 2 ADP + 2 phosphate = protochlorophyllide a + reduced 2[4Fe-4S]-[ferredoxin] + 2 ATP + 2 H2O. It participates in porphyrin-containing compound metabolism; bacteriochlorophyll biosynthesis (light-independent). Component of the dark-operative protochlorophyllide reductase (DPOR) that uses Mg-ATP and reduced ferredoxin to reduce ring D of protochlorophyllide (Pchlide) to form chlorophyllide a (Chlide). This reaction is light-independent. The L component serves as a unique electron donor to the NB-component of the complex, and binds Mg-ATP. The sequence is that of Light-independent protochlorophyllide reductase iron-sulfur ATP-binding protein from Methylorubrum extorquens (strain CM4 / NCIMB 13688) (Methylobacterium extorquens).